The chain runs to 331 residues: Type 2 lactosamine alpha-2,3-sialyltransferase (331 aa).

The Cytoplasmic portion of the chain corresponds to 1–4 (MRGY). Residues 5-25 (LVAIFLSAVFLYYVLHCILWG) form a helical; Signal-anchor for type II membrane protein membrane-spanning segment. Residues 26–331 (TNVYWAAPVE…KNLVINLTQD (306 aa)) are Lumenal-facing. 6 N-linked (GlcNAc...) asparagine glycosylation sites follow: Asn129, Asn181, Asn282, Asn295, Asn308, and Asn327.

Belongs to the glycosyltransferase 29 family.

It is found in the golgi apparatus membrane. The catalysed reaction is a neolactoside nLc4Cer(d18:1(4E)) + CMP-N-acetyl-beta-neuraminate = a neolactoside IV(3)-alpha-NeuAc-nLc4Cer(d18:1(4E)) + CMP + H(+). It catalyses the reaction a beta-D-galactosyl-(1-&gt;4)-N-acetyl-beta-D-glucosaminyl derivative + CMP-N-acetyl-beta-neuraminate = an N-acetyl-alpha-neuraminyl-(2-&gt;3)-beta-D-galactosyl-(1-&gt;4)-N-acetyl-beta-D-glucosaminyl derivative + CMP + H(+). The enzyme catalyses a neolactoside nLc6Cer(d18:1(4E)) + CMP-N-acetyl-beta-neuraminate = a neolactoside VI(3)-alpha-NeuNAc-nLc6Cer(d18:1(4E)) + CMP + H(+). Functionally, transfers the sialyl residue from CMP-N-acetyl-beta-neuraminate to the terminal galactose residue on sugar chains of glycoproteins and glycolipids. It's alpha-2,3-sialyltransferase activity is specific toward type II glycan chains (Galbeta1-4GlcNAc) on glycoproteins and glycolipids such as neolactosides nLc4Cer and nLc6Cer, whose sialyl-products serve as precursors for the Lewis X antigen. Critically involved in the synthesis of functional selectin ligands needed for neutrophil recruitment during inflammation and lymphocyte homing to the lymph nodes. This chain is Type 2 lactosamine alpha-2,3-sialyltransferase (ST3GAL6), found in Pongo abelii (Sumatran orangutan).